We begin with the raw amino-acid sequence, 281 residues long: DegV domain-containing protein (281 aa).

The DegV domain maps to 3 to 280; sequence WKIVSDSGCD…EGGLLMGYEI (278 aa). Positions 63 and 91 each coordinate hexadecanoate.

Its function is as follows. May bind long-chain fatty acids, such as palmitate, and may play a role in lipid transport or fatty acid metabolism. This chain is DegV domain-containing protein, found in Streptococcus gordonii.